The primary structure comprises 661 residues: UvrABC system protein B (661 aa).

The Helicase ATP-binding domain maps to 25-182 (KGLNNKKRSQ…NDLVNLQYER (158 aa)). 38–45 (GITGSGKT) provides a ligand contact to ATP. Residues 91-114 (YYDYYQPEAYIPKTDVFIEKDSSI) carry the Beta-hairpin motif. One can recognise a Helicase C-terminal domain in the interval 430–592 (QVEDLVGEIQ…IIPKTINRTI (163 aa)). The region spanning 621-656 (KAHIDKLRKEMLKAASNLEFEQAAKLRDQLKTLEEA) is the UVR domain.

Belongs to the UvrB family. As to quaternary structure, forms a heterotetramer with UvrA during the search for lesions. Interacts with UvrC in an incision complex.

Its subcellular location is the cytoplasm. In terms of biological role, the UvrABC repair system catalyzes the recognition and processing of DNA lesions. A damage recognition complex composed of 2 UvrA and 2 UvrB subunits scans DNA for abnormalities. Upon binding of the UvrA(2)B(2) complex to a putative damaged site, the DNA wraps around one UvrB monomer. DNA wrap is dependent on ATP binding by UvrB and probably causes local melting of the DNA helix, facilitating insertion of UvrB beta-hairpin between the DNA strands. Then UvrB probes one DNA strand for the presence of a lesion. If a lesion is found the UvrA subunits dissociate and the UvrB-DNA preincision complex is formed. This complex is subsequently bound by UvrC and the second UvrB is released. If no lesion is found, the DNA wraps around the other UvrB subunit that will check the other stand for damage. This chain is UvrABC system protein B, found in Rickettsia bellii (strain OSU 85-389).